A 241-amino-acid chain; its full sequence is Putative integrase ORF241 (241 aa).

Residues 82–241 (VEAKKTLVSA…AIEMLRKLAD (160 aa)) form the Tyr recombinase domain. Active-site residues include R119, K144, H191, R194, and H217. Catalysis depends on Y226, which acts as the O-(3'-phospho-DNA)-tyrosine intermediate.

It belongs to the 'phage' integrase family.

In terms of biological role, this protein may encode an integrase, which is necessary for integration of the viral DNA into host genome. This Acidianus convivator (ATV) protein is Putative integrase ORF241.